The following is a 641-amino-acid chain: uncharacterized protein (641 aa).

Ser-112 carries the phosphoserine modification. Disordered stretches follow at residues 118 to 243 (STSI…LDPT), 261 to 289 (KSPRPIQSTRVGLRTHSRQASSAGDTVSI), 355 to 386 (DKSDGDQREEDCVREGISVRSSSPTSPTRLEA), and 404 to 430 (DGEGLTTESDVSEPPGTSSSAAVQSHS). The segment covering 132 to 162 (ASVSSQYPHRTFQKQVNKTCVSKSDGPSGNG) has biased composition (polar residues). Ser-198 is subject to Phosphoserine. Polar residues-rich tracts occupy residues 222–234 (NQELPGSSVSRSN) and 278–289 (RQASSAGDTVSI). Over residues 355-368 (DKSDGDQREEDCVR) the composition is skewed to basic and acidic residues. Composition is skewed to low complexity over residues 374–383 (RSSSPTSPTR) and 421–430 (SSSAAVQSHS).

This is an uncharacterized protein from Mus musculus (Mouse).